Consider the following 125-residue polypeptide: Large ribosomal subunit protein bL19 (125 aa).

It belongs to the bacterial ribosomal protein bL19 family.

Its function is as follows. This protein is located at the 30S-50S ribosomal subunit interface and may play a role in the structure and function of the aminoacyl-tRNA binding site. This Ehrlichia ruminantium (strain Welgevonden) protein is Large ribosomal subunit protein bL19.